A 354-amino-acid polypeptide reads, in one-letter code: Photosystem II D2 protein (354 aa).

Thr-2 carries the post-translational modification N-acetylthreonine. Thr-2 bears the Phosphothreonine mark. A helical transmembrane segment spans residues 42–62 (CAYFALGGWFTGTTFVTSWYT). His-119 contacts chlorophyll a. Residues 126-142 (GFMLRQFELARSVQLRP) traverse the membrane as a helical segment. Positions 131 and 144 each coordinate pheophytin a. A helical transmembrane segment spans residues 154 to 167 (VFVSVFLIYPLGQS). His-199 is a chlorophyll a binding site. Residues 209-229 (AALLCAIHGATVENTLFEDGD) form a helical membrane-spanning segment. A plastoquinone is bound by residues His-216 and Phe-263. His-216 serves as a coordination point for Fe cation. His-270 provides a ligand contact to Fe cation. A helical membrane pass occupies residues 280–296 (GLWMSALGVVGLALNLR).

The protein belongs to the reaction center PufL/M/PsbA/D family. As to quaternary structure, PSII is composed of 1 copy each of membrane proteins PsbA, PsbB, PsbC, PsbD, PsbE, PsbF, PsbH, PsbI, PsbJ, PsbK, PsbL, PsbM, PsbT, PsbX, PsbY, PsbZ, Psb30/Ycf12, at least 3 peripheral proteins of the oxygen-evolving complex and a large number of cofactors. It forms dimeric complexes. The cofactor is The D1/D2 heterodimer binds P680, chlorophylls that are the primary electron donor of PSII, and subsequent electron acceptors. It shares a non-heme iron and each subunit binds pheophytin, quinone, additional chlorophylls, carotenoids and lipids. There is also a Cl(-1) ion associated with D1 and D2, which is required for oxygen evolution. The PSII complex binds additional chlorophylls, carotenoids and specific lipids..

Its subcellular location is the plastid. It localises to the chloroplast thylakoid membrane. The catalysed reaction is 2 a plastoquinone + 4 hnu + 2 H2O = 2 a plastoquinol + O2. Its function is as follows. Photosystem II (PSII) is a light-driven water:plastoquinone oxidoreductase that uses light energy to abstract electrons from H(2)O, generating O(2) and a proton gradient subsequently used for ATP formation. It consists of a core antenna complex that captures photons, and an electron transfer chain that converts photonic excitation into a charge separation. The D1/D2 (PsbA/PsbD) reaction center heterodimer binds P680, the primary electron donor of PSII as well as several subsequent electron acceptors. D2 is needed for assembly of a stable PSII complex. In Piper cenocladum (Ant piper), this protein is Photosystem II D2 protein.